A 304-amino-acid polypeptide reads, in one-letter code: tRNA uridine(34) hydroxylase (304 aa).

The region spanning 124–219 (QDEETLLIDT…YLETIPKEES (96 aa)) is the Rhodanese domain. C179 serves as the catalytic Cysteine persulfide intermediate.

Belongs to the TrhO family.

The catalysed reaction is uridine(34) in tRNA + AH2 + O2 = 5-hydroxyuridine(34) in tRNA + A + H2O. In terms of biological role, catalyzes oxygen-dependent 5-hydroxyuridine (ho5U) modification at position 34 in tRNAs. This is tRNA uridine(34) hydroxylase from Bartonella quintana (strain Toulouse) (Rochalimaea quintana).